The chain runs to 101 residues: UPF0473 protein str1961 (101 aa).

This sequence belongs to the UPF0473 family.

The chain is UPF0473 protein str1961 from Streptococcus thermophilus (strain CNRZ 1066).